Reading from the N-terminus, the 204-residue chain is dITP/XTP pyrophosphatase (204 aa).

7–12 contributes to the substrate binding site; that stretch reads TNNKDK. Positions 38 and 74 each coordinate Mg(2+). The active-site Proton acceptor is the Asp74. Substrate is bound by residues Ser75, 156-159, Lys179, and 184-185; these read FGYD and HR.

The protein belongs to the HAM1 NTPase family. Homodimer. Mg(2+) serves as cofactor.

It catalyses the reaction XTP + H2O = XMP + diphosphate + H(+). The enzyme catalyses dITP + H2O = dIMP + diphosphate + H(+). The catalysed reaction is ITP + H2O = IMP + diphosphate + H(+). Functionally, pyrophosphatase that catalyzes the hydrolysis of nucleoside triphosphates to their monophosphate derivatives, with a high preference for the non-canonical purine nucleotides XTP (xanthosine triphosphate), dITP (deoxyinosine triphosphate) and ITP. Seems to function as a house-cleaning enzyme that removes non-canonical purine nucleotides from the nucleotide pool, thus preventing their incorporation into DNA/RNA and avoiding chromosomal lesions. This is dITP/XTP pyrophosphatase from Campylobacter fetus subsp. fetus (strain 82-40).